Reading from the N-terminus, the 115-residue chain is Large ribosomal subunit protein bL20c (115 aa).

The protein belongs to the bacterial ribosomal protein bL20 family.

Its subcellular location is the plastid. It is found in the chloroplast. In terms of biological role, binds directly to 23S ribosomal RNA and is necessary for the in vitro assembly process of the 50S ribosomal subunit. It is not involved in the protein synthesizing functions of that subunit. In Mesostigma viride (Green alga), this protein is Large ribosomal subunit protein bL20c (rpl20).